Here is a 677-residue protein sequence, read N- to C-terminus: Methionine--tRNA ligase (677 aa).

Residues 15–25 (PYANGSIHLGH) carry the 'HIGH' region motif. 4 residues coordinate Zn(2+): Cys146, Cys149, Cys159, and Cys162. Residues 333–337 (KMSKS) carry the 'KMSKS' region motif. Lys336 is a binding site for ATP. Positions 575–677 (DFAKVDLRVA…DGAKPGQQVK (103 aa)) constitute a tRNA-binding domain.

Belongs to the class-I aminoacyl-tRNA synthetase family. MetG type 1 subfamily. Homodimer. The cofactor is Zn(2+).

It localises to the cytoplasm. It carries out the reaction tRNA(Met) + L-methionine + ATP = L-methionyl-tRNA(Met) + AMP + diphosphate. Is required not only for elongation of protein synthesis but also for the initiation of all mRNA translation through initiator tRNA(fMet) aminoacylation. The polypeptide is Methionine--tRNA ligase (Citrobacter koseri (strain ATCC BAA-895 / CDC 4225-83 / SGSC4696)).